Consider the following 441-residue polypeptide: Mitochondrial distribution and morphology protein 12 (441 aa).

Positions 1-441 (MSIDIDWERA…VYPSFWTFLV (441 aa)) constitute an SMP-LTD domain. Disordered stretches follow at residues 68-89 (DFYE…PMRE) and 183-289 (RAVT…RMRE). 2 stretches are compositionally biased toward polar residues: residues 226–245 (SRPS…SVST) and 253–263 (PSQTLLANNPG).

The protein belongs to the MDM12 family. Component of the ER-mitochondria encounter structure (ERMES) or MDM complex, composed of MMM1, MDM10, MDM12 and MDM34. An MMM1 homodimer associates with one molecule of MDM12 on each side in a pairwise head-to-tail manner, and the SMP-LTD domains of MMM1 and MDM12 generate a continuous hydrophobic tunnel for phospholipid trafficking.

The protein localises to the mitochondrion outer membrane. The protein resides in the endoplasmic reticulum membrane. Component of the ERMES/MDM complex, which serves as a molecular tether to connect the endoplasmic reticulum (ER) and mitochondria. Components of this complex are involved in the control of mitochondrial shape and protein biogenesis, and function in nonvesicular lipid trafficking between the ER and mitochondria. MDM12 is required for the interaction of the ER-resident membrane protein MMM1 and the outer mitochondrial membrane-resident beta-barrel protein MDM10. The MDM12-MMM1 subcomplex functions in the major beta-barrel assembly pathway that is responsible for biogenesis of all mitochondrial outer membrane beta-barrel proteins, and acts in a late step after the SAM complex. The MDM10-MDM12-MMM1 subcomplex further acts in the TOM40-specific pathway after the action of the MDM12-MMM1 complex. Essential for establishing and maintaining the structure of mitochondria and maintenance of mtDNA nucleoids. The sequence is that of Mitochondrial distribution and morphology protein 12 from Paracoccidioides lutzii (strain ATCC MYA-826 / Pb01) (Paracoccidioides brasiliensis).